The chain runs to 158 residues: Protein BTG2 (158 aa).

Ser-147 bears the Phosphoserine; by MAPK1 and MAPK3 mark. Phosphoserine; by MAPK14 is present on Ser-149.

It belongs to the BTG family. In terms of assembly, interacts with PRKCABP. Interacts with CNOT7 and CNOT8; indicative for an association with the CCR4-NOT complex. Interacts with PIN1, inducing mitochondrial depolarization. In terms of processing, phosphorylated at Ser-147 by MAPK1/ERK2 and MAPK3/ERK1, and at Ser-149 by MAPK14, leading to PIN1-binding and mitochondrial depolarization. In terms of tissue distribution, in brain at embryonic day 13.5, placenta, amnion, and spleen, which are proliferating and/or differentiating.

Its function is as follows. Anti-proliferative protein; the function is mediated by association with deadenylase subunits of the CCR4-NOT complex. Activates mRNA deadenylation in a CNOT6 and CNOT7-dependent manner. In vitro can inhibit deadenylase activity of CNOT7 and CNOT8. Involved in cell cycle regulation. Could be involved in the growth arrest and differentiation of the neuronal precursors. Modulates transcription regulation mediated by ESR1. Involved in mitochondrial depolarization and neurite outgrowth. In Rattus norvegicus (Rat), this protein is Protein BTG2 (Btg2).